The following is a 553-amino-acid chain: Telomere repeat-binding protein 2 (553 aa).

Residues serine 147–serine 170 form a disordered region. Positions valine 285–glutamate 364 constitute a Ubiquitin-like domain. A disordered region spans residues alanine 394 to glycine 413. The HTH myb-type domain maps to alanine 448–arginine 507. Residues tryptophan 476–valine 503 constitute a DNA-binding region (H-T-H motif).

In terms of assembly, homodimer and heterodimer with TRP1. Interacts with SNL1. In terms of tissue distribution, expressed ubiquitously. Highest expression in flowers and leaves.

The protein localises to the nucleus. Functionally, binds specifically to the plant telomeric double-stranded DNA sequences. At least 2 repeats of telomeric sequences are required for binding. Induces DNA bending. This Arabidopsis thaliana (Mouse-ear cress) protein is Telomere repeat-binding protein 2 (TRP2).